The following is a 380-amino-acid chain: cAMP-dependent protein kinase type I-alpha regulatory subunit (380 aa).

At Met-1 the chain carries N-acetylmethionine. Ala-2 is subject to N-acetylalanine; in cAMP-dependent protein kinase type I-alpha regulatory subunit, N-terminally processed. The dimerization and phosphorylation stretch occupies residues 2–135; sequence ASGSTASEEE…ALAKAIEKNV (134 aa). Phosphoserine is present on residues Ser-3, Ser-76, and Ser-82. The segment at 64-96 is disordered; that stretch reads IQNLQKASARADSREDEISPPPPNPVVKGRRRR. The Pseudophosphorylation motif signature appears at 95–99; sequence RRGAI. Phosphoserine is present on Ser-100. 3',5'-cyclic AMP-binding positions include 136-253, Glu-201, Arg-210, 254-380, Glu-325, and Arg-334; these read LFSH…SKVS and ILES…SLSV. Ser-257 is modified (phosphoserine).

Belongs to the cAMP-dependent kinase regulatory chain family. As to quaternary structure, the inactive holoenzyme is composed of two regulatory chains and two catalytic chains. Activation by cAMP releases the two active catalytic monomers and the regulatory dimer. Interacts with PRKACA and PRKACB. PRKAR1A also interacts with RFC2; the complex may be involved in cell survival. Interacts with AKAP4. Interacts with RARA; the interaction occurs in the presence of cAMP or FSH and regulates RARA transcriptional activity. Interacts with the phosphorylated form of PJA2. Interacts with CBFA2T3. Interacts with PRKX; regulates this cAMP-dependent protein kinase. Interacts with smAKAP; this interaction may target PRKAR1A to the plasma membrane. Interacts with AICDA. In terms of processing, the pseudophosphorylation site binds to the substrate-binding region of the catalytic chain, resulting in the inhibition of its activity. In terms of tissue distribution, four types of regulatory chains are found: I-alpha, I-beta, II-alpha, and II-beta. Their expression varies among tissues and is in some cases constitutive and in others inducible.

The protein localises to the cell membrane. Regulatory subunit of the cAMP-dependent protein kinases involved in cAMP signaling in cells. This chain is cAMP-dependent protein kinase type I-alpha regulatory subunit (PRKAR1A), found in Sus scrofa (Pig).